A 522-amino-acid chain; its full sequence is Glutamate--cysteine ligase, chloroplastic (522 aa).

2 cysteine pairs are disulfide-bonded: C186–C406 and C349–C364.

This sequence belongs to the carboxylate-amine ligase family. Glutamate--cysteine ligase type 2 subfamily. As to quaternary structure, homodimer or monomer when oxidized or reduced, respectively. The Cys-186-Cys-406 disulfide bridge is known to modulate the enzyme activity according to the redox status. The oxidized form constitutes the active enzyme. Abundant in leaves and roots. Expressed to a high level in leaf trichomes of mature plant.

The protein localises to the plastid. The protein resides in the chloroplast. It carries out the reaction L-cysteine + L-glutamate + ATP = gamma-L-glutamyl-L-cysteine + ADP + phosphate + H(+). Its pathway is sulfur metabolism; glutathione biosynthesis; glutathione from L-cysteine and L-glutamate: step 1/2. Its activity is regulated as follows. Feedback inhibition by glutathione. Inhibited by buthionine sulfoximine and cystamine. Its function is as follows. Seems to play an important role in controlling the expression of resistance responses like the regulation of salicylic acid (SA) and phytoalexin (camalexin) production. Involved in resistance to fungal and bacterial pathogens. Required for the regulation of cell proliferation in root apical meristems through the GSH-dependent developmental pathway. Also participates in the detoxification process, the antioxidant response and is essential for embryo development and proper seed maturation. The chain is Glutamate--cysteine ligase, chloroplastic (GSH1) from Arabidopsis thaliana (Mouse-ear cress).